The following is a 249-amino-acid chain: MTRKLVLLRHGQSQWNSMNRFTGWVDIGLTEQGHQEATMAGHLMKKEGLEFDVAHTSLLKRAIHTLQDALKALDQDWLPIYKSWRLNERHYGALQGLDKIDTAAKHGEEQVNIWRRSYDIQPPPIDLDDPSHPMRDRRYAALDRKVLPVRESLKNTLERVLPYWNDAIAPQLNDNKTVLISAHGNSLRALYKYLNKESDEKILNVNIPTGIPLLFELSDTLQVVSYRYLGDPDAAQRAAEMVANQGKAK.

Substrate contacts are provided by residues 9-16, 22-23, Arg-61, 88-91, Lys-99, 115-116, and 184-185; these read RHGQSQWN, TG, ERHY, RR, and GN. His-10 serves as the catalytic Tele-phosphohistidine intermediate. Glu-88 (proton donor/acceptor) is an active-site residue.

It belongs to the phosphoglycerate mutase family. BPG-dependent PGAM subfamily. As to quaternary structure, homodimer.

The catalysed reaction is (2R)-2-phosphoglycerate = (2R)-3-phosphoglycerate. It functions in the pathway carbohydrate degradation; glycolysis; pyruvate from D-glyceraldehyde 3-phosphate: step 3/5. Catalyzes the interconversion of 2-phosphoglycerate and 3-phosphoglycerate. The chain is 2,3-bisphosphoglycerate-dependent phosphoglycerate mutase from Xylella fastidiosa (strain M23).